The sequence spans 644 residues: MFQDNPLLAQLKQQLHSQTPRVEGVVKGTEKGFGFLEVDGQKSYFIPPPYMKKVMHGDRVSATLHTEKEREIAEPETLIEPFLSRFVGRVQKRDDRLSIVPDHPLLKDAIQCRPVRGLNHNFQAGDWAVAEMCRHPLKGDRGFNADLTQFITDGEDHLAPWWVTLARHNLEKEAPEMIAISEPDASLPREDLTALNFVTIDSASTEDMDDALFVQDNGDGSLQLTIAIADPTAYVEQGSPLDEIARKRAFTNYLPGFNIPMLPRDLSDNLCSLRPNQRRPVLACRVTIGADGALADDIRFFAAEIESKAKLVYDEVSDWLEGIAGWQPPSDDIAQQITLLKRVCDVRNSWRHQHALVFKDRPDYRFVLGEKGEVLEIVTEQRRTANRIVEECMIASNVCAAIVLRDRLGFGIYNVHTGFDPLLVEQAVTVLQANGVEADAEKLLTLDGFCELRRHLDSQPTQFLDSRIRRSQTYAEISTTPGPHYGLGLEAYATWTSPIRKYGDMVNHRLLKAIIAEQPAEKPQDEVTVQLAERRRLNRMAERDVGDWLYARYLKDKAGTDERFNAEIIDVTRGGLRVRLLDNGAVAFIPAPFIHAVRDEMVCSQETGTVQIKGEVVYRQGDNLQVTIAEVRMETRSVIARPAA.

The RNB domain occupies 189-516 (REDLTALNFV…NHRLLKAIIA (328 aa)). Positions 561 to 643 (DERFNAEIID…ETRSVIARPA (83 aa)) constitute an S1 motif domain.

The protein belongs to the RNR ribonuclease family. RNase II subfamily.

The protein localises to the cytoplasm. It carries out the reaction Exonucleolytic cleavage in the 3'- to 5'-direction to yield nucleoside 5'-phosphates.. Involved in mRNA degradation. Hydrolyzes single-stranded polyribonucleotides processively in the 3' to 5' direction. The sequence is that of Exoribonuclease 2 from Serratia proteamaculans (strain 568).